A 218-amino-acid chain; its full sequence is Mediator of RNA polymerase II transcription subunit 20 (218 aa).

This sequence belongs to the Mediator complex subunit 20 family. Component of the Mediator complex.

It localises to the nucleus. Functionally, component of the Mediator complex, a coactivator involved in the regulated transcription of nearly all RNA polymerase II-dependent genes. Mediator functions as a bridge to convey information from gene-specific regulatory proteins to the basal RNA polymerase II transcription machinery. Mediator is recruited to promoters by direct interactions with regulatory proteins and serves as a scaffold for the assembly of a functional preinitiation complex with RNA polymerase II and the general transcription factors. The polypeptide is Mediator of RNA polymerase II transcription subunit 20 (SRB2) (Yarrowia lipolytica (strain CLIB 122 / E 150) (Yeast)).